Reading from the N-terminus, the 165-residue chain is Phosphopantetheine adenylyltransferase (165 aa).

Threonine 9 serves as a coordination point for substrate. ATP contacts are provided by residues 9 to 10 (TF) and histidine 17. The substrate site is built by lysine 41, leucine 78, and arginine 92. Residues 93-95 (GLR), glutamate 103, and 128-134 (HQAIASK) each bind ATP.

Belongs to the bacterial CoaD family. Homohexamer. The cofactor is Mg(2+).

Its subcellular location is the cytoplasm. The catalysed reaction is (R)-4'-phosphopantetheine + ATP + H(+) = 3'-dephospho-CoA + diphosphate. The protein operates within cofactor biosynthesis; coenzyme A biosynthesis; CoA from (R)-pantothenate: step 4/5. Its function is as follows. Reversibly transfers an adenylyl group from ATP to 4'-phosphopantetheine, yielding dephospho-CoA (dPCoA) and pyrophosphate. The sequence is that of Phosphopantetheine adenylyltransferase from Ruegeria sp. (strain TM1040) (Silicibacter sp.).